Consider the following 67-residue polypeptide: Phycobilisome 7.8 kDa linker polypeptide, allophycocyanin-associated, core (67 aa).

In terms of domain architecture, CpcD-like spans 1–56 (MRMFRITACLPSPSKIRTQRELQNTFFTKLVPYDAWFREQQRIQKLGGKIIKVELA).

Belongs to the phycobilisome linker protein family.

The protein resides in the cellular thylakoid membrane. In terms of biological role, rod linker protein, associated with allophycocyanin. Linker polypeptides determine the state of aggregation and the location of the disk-shaped phycobiliprotein units within the phycobilisome and modulate their spectroscopic properties in order to mediate a directed and optimal energy transfer. This is Phycobilisome 7.8 kDa linker polypeptide, allophycocyanin-associated, core (apcC) from Synechococcus sp. (strain ATCC 27144 / PCC 6301 / SAUG 1402/1) (Anacystis nidulans).